We begin with the raw amino-acid sequence, 258 residues long: Snake venom serine proteinase 8 (258 aa).

A signal peptide spans 1–18; it reads MVLIRVLANLLILQLSYA. The propeptide occupies 19 to 24; sequence QKSSEL. In terms of domain architecture, Peptidase S1 spans 25–249; the sequence is VIGGDECNIN…YNDWIQSIIA (225 aa). 6 disulfide bridges follow: Cys-31–Cys-163, Cys-50–Cys-66, Cys-98–Cys-256, Cys-142–Cys-210, Cys-174–Cys-189, and Cys-200–Cys-225. The N-linked (GlcNAc...) asparagine glycan is linked to Asn-44. Active-site charge relay system residues include His-65 and Asp-110. The active-site Charge relay system is Ser-204.

This sequence belongs to the peptidase S1 family. Snake venom subfamily. Monomer. As to expression, expressed by the venom gland.

It is found in the secreted. Functionally, snake venom serine protease that may act in the hemostasis system of the prey. This Crotalus adamanteus (Eastern diamondback rattlesnake) protein is Snake venom serine proteinase 8.